Reading from the N-terminus, the 48-residue chain is Hemoglobin subunit beta-B (48 aa).

In terms of domain architecture, Globin spans 2–48 (EWTDAERGAILSLWGKIDPDELGPALLARXXLVYXXTQRYFASFGDL).

The protein belongs to the globin family. As to quaternary structure, heterotetramer of two alpha chains and two beta chains. As to expression, red blood cells.

Its function is as follows. Involved in oxygen transport from gills to the various peripheral tissues. The chain is Hemoglobin subunit beta-B from Catostomus clarkii (Desert sucker).